A 298-amino-acid polypeptide reads, in one-letter code: MDKKSSHPAGAARDILIELRNAGVYRDGRWLVRNVDLSVERGEIVTLIGPNGAGKSTAAKMALHILKPDEGMVSHKPGLRIGYVPQKINIDRTLPLSVERLMTLTGPLPRKEIDAALEAVGIAHLAKAETAHLSGGEFQRALMARALARKPDIMVLDEPVQGVDFSGEAALYELIARLRDDTGCGVLLSSHDLHLVMAATDRVICLNGHVCCSGTPRDVTSSPEYVRLFGSRAVGPLAVYEHHHDHTHLPDGRVLYADGTTADPIAGSTMGPRGHCHVEDGHHHDHEHHHHEGGQPRA.

The ABC transporter domain maps to Ile17–Arg232. Position 49–56 (Gly49–Ser56) interacts with ATP. The segment at Arg273–Ala298 is disordered. Residues Cys276–Ala298 are compositionally biased toward basic and acidic residues.

Belongs to the ABC transporter superfamily. Zinc importer (TC 3.A.1.15.5) family. As to quaternary structure, the complex is composed of two ATP-binding proteins (ZnuC), two transmembrane proteins (ZnuB) and a solute-binding protein (ZnuA).

It is found in the cell inner membrane. The enzyme catalyses Zn(2+)(out) + ATP(in) + H2O(in) = Zn(2+)(in) + ADP(in) + phosphate(in) + H(+)(in). Its function is as follows. Part of the ABC transporter complex ZnuABC involved in zinc import. Responsible for energy coupling to the transport system. In Brucella suis biovar 1 (strain 1330), this protein is Zinc import ATP-binding protein ZnuC.